A 360-amino-acid chain; its full sequence is Nucleoporin SEH1 (360 aa).

WD repeat units lie at residues 10-49 (DHKD…DWHC), 55-96 (THSG…SNDK), 111-152 (DSRT…NLSQ), 160-210 (SCKL…RKYA), 217-258 (TVTD…KELT), and 276-315 (NHNS…NWKC). Residue Lys12 forms a Glycyl lysine isopeptide (Lys-Gly) (interchain with G-Cter in SUMO2) linkage. A phosphoserine mark is found at Ser179 and Ser190. Polar residues predominate over residues 324–354 (SPVNGSSQQGTSNPSLGSNIPSLQNSLNGSS). A disordered region spans residues 324 to 360 (SPVNGSSQQGTSNPSLGSNIPSLQNSLNGSSAGRKHS).

The protein belongs to the WD repeat SEC13 family. In terms of assembly, component of the Nup107-160 subcomplex of the nuclear pore complex (NPC). The Nup107-160 subcomplex includes NUP160, NUP133, NUP107, NUP98, NUP85, NUP43, NUP37, SEH1 and SEC13. The SEH1 subunit appears to be only weakly associated with the Nup107-160 subcomplex. Component of the GATOR2 subcomplex, composed of MIOS, SEC13, SEH1L, WDR24 and WDR59. The GATOR2 complex interacts with CASTOR1 and CASTOR2; the interaction is negatively regulated by arginine. The GATOR2 complex interacts with SESN1, SESN2 and SESN3; the interaction is negatively regulated by amino acids. SESN1, SESN2 and SESN3 convey leucine availability via direct interaction with SEH1L and WDR24.

Its subcellular location is the chromosome. It localises to the centromere. The protein localises to the kinetochore. It is found in the nucleus. The protein resides in the nuclear pore complex. Its subcellular location is the lysosome membrane. The GATOR2 complex is negatively regulated by the upstream amino acid sensors CASTOR1 and SESN2, which sequester the GATOR2 complex in absence of amino acids. In the presence of abundant amino acids, GATOR2 is released from CASTOR1 and SESN2 and activated. Functionally, component of the Nup107-160 subcomplex of the nuclear pore complex (NPC). The Nup107-160 subcomplex is required for the assembly of a functional NPC. The Nup107-160 subcomplex is also required for normal kinetochore microtubule attachment, mitotic progression and chromosome segregation. This subunit plays a role in recruitment of the Nup107-160 subcomplex to the kinetochore. In terms of biological role, as a component of the GATOR2 complex, functions as an activator of the amino acid-sensing branch of the mTORC1 signaling pathway. The GATOR2 complex indirectly activates mTORC1 through the inhibition of the GATOR1 subcomplex. GATOR2 probably acts as an E3 ubiquitin-protein ligase toward GATOR1. In the presence of abundant amino acids, the GATOR2 complex mediates ubiquitination of the NPRL2 core component of the GATOR1 complex, leading to GATOR1 inactivation. In the absence of amino acids, GATOR2 is inhibited, activating the GATOR1 complex. Within the GATOR2 complex, SEC13 and SEH1L are required to stabilize the complex. The polypeptide is Nucleoporin SEH1 (SEH1L) (Pongo abelii (Sumatran orangutan)).